The sequence spans 374 residues: Amino acid binding protein (374 aa).

The first 27 residues, 1-27, serve as a signal peptide directing secretion; that stretch reads MSKKLFRKGILALAVSSVMGLSTHALA.

The protein belongs to the leucine-binding protein family.

The protein resides in the periplasm. Functionally, binds primarily proteinogenic amino acids. In Pseudomonas aeruginosa (strain ATCC 15692 / DSM 22644 / CIP 104116 / JCM 14847 / LMG 12228 / 1C / PRS 101 / PAO1), this protein is Amino acid binding protein.